The following is a 162-amino-acid chain: Phosphopantetheine adenylyltransferase (162 aa).

Substrate is bound at residue Thr9. ATP-binding positions include 9 to 10 (TF) and His17. Substrate-binding residues include Lys41, Leu73, and Arg87. Residues 88–90 (GLR), Glu98, and 123–129 (LSYISSS) each bind ATP.

The protein belongs to the bacterial CoaD family. In terms of assembly, homohexamer. Mg(2+) is required as a cofactor.

Its subcellular location is the cytoplasm. The catalysed reaction is (R)-4'-phosphopantetheine + ATP + H(+) = 3'-dephospho-CoA + diphosphate. Its pathway is cofactor biosynthesis; coenzyme A biosynthesis; CoA from (R)-pantothenate: step 4/5. In terms of biological role, reversibly transfers an adenylyl group from ATP to 4'-phosphopantetheine, yielding dephospho-CoA (dPCoA) and pyrophosphate. This chain is Phosphopantetheine adenylyltransferase, found in Teredinibacter turnerae (strain ATCC 39867 / T7901).